The chain runs to 177 residues: Non-specific lipid transfer protein GPI-anchored 22 (177 aa).

Residues 1 to 29 form the signal peptide; it reads MARFMAYNQNPQMLALCITVAVMFLGVRS. Intrachain disulfides connect C38-C81, C48-C63, C64-C108, and C79-C117. A glycan (N-linked (GlcNAc...) asparagine) is linked at N113. The GPI-anchor amidated serine moiety is linked to residue S152. A propeptide spans 153–177 (removed in mature form); sequence SSIKGRDNKQFGLMMAGALSIWYIM.

The protein belongs to the plant LTP family. Expressed in seedlings, preferentially in hypocotyls and roots. Also observed in siliques.

It localises to the cell membrane. In terms of biological role, probable lipid transfer protein. This is Non-specific lipid transfer protein GPI-anchored 22 from Arabidopsis thaliana (Mouse-ear cress).